The chain runs to 754 residues: Lysyl oxidase homolog 3 (754 aa).

The N-terminal stretch at 1–26 (MRAVSVWYCCPWGLLLLHCLCSFSVG) is a signal peptide. 4 SRCR domains span residues 45 to 146 (FRLA…VICK), 170 to 283 (VRLR…VSCV), 308 to 408 (VRLK…VRCN), and 418 to 526 (IRLS…VICS). 17 disulfides stabilise this stretch: Cys-71/Cys-135, Cys-84/Cys-145, Cys-115/Cys-125, Cys-202/Cys-272, Cys-215/Cys-282, Cys-249/Cys-259, Cys-333/Cys-397, Cys-346/Cys-407, Cys-377/Cys-387, Cys-447/Cys-512, Cys-460/Cys-525, Cys-493/Cys-503, Cys-555/Cys-561, Cys-607/Cys-655, Cys-639/Cys-645, Cys-667/Cys-677, and Cys-714/Cys-728. Asn-112 carries an N-linked (GlcNAc...) asparagine glycan. N-linked (GlcNAc...) asparagine glycosylation occurs at Asn-267. N-linked (GlcNAc...) asparagine glycans are attached at residues Asn-391 and Asn-482. Residues 530 to 733 (SDLLLHSALV…WVHNCHIGDA (204 aa)) form a lysyl-oxidase like region. His-608, His-610, and His-612 together coordinate Cu cation. Asn-626 carries N-linked (GlcNAc...) asparagine glycosylation. The segment at residues 635-671 (KASFCLEDTECQEDVSKRYECANFGEQGITVGCWDLY) is a cross-link (lysine tyrosylquinone (Lys-Tyr)). Position 671 is a 2',4',5'-topaquinone (Tyr-671).

This sequence belongs to the lysyl oxidase family. Cu cation serves as cofactor. It depends on lysine tyrosylquinone residue as a cofactor. Post-translationally, the lysine tyrosylquinone cross-link (LTQ) is generated by condensation of the epsilon-amino group of a lysine with a topaquinone produced by oxidation of tyrosine. In terms of tissue distribution, expressed in palate: predominantly present in the palate mesenchyme and tongue (at protein level). In spine, expressed in the original intervertebral disk, cartilage primordia, anterior and posterior longitudinal ligaments, meninges of spinal cord, lung and heart. In eyes, strongly expressed in the skin of the eyelid and weakly expressed in the cornea and sclera. In lung, predominantly expressed in the pulmonary mesenchyme. In developing muscle, expressed at myofiber ends (at protein level).

The protein resides in the secreted. Its subcellular location is the extracellular space. The protein localises to the cytoplasm. It localises to the nucleus. It carries out the reaction L-lysyl-[protein] + O2 + H2O = (S)-2-amino-6-oxohexanoyl-[protein] + H2O2 + NH4(+). The catalysed reaction is N(6)-acetyl-L-lysyl-[protein] + O2 + H2O = acetamide + (S)-2-amino-6-oxohexanoyl-[protein] + H2O2. In terms of biological role, protein-lysine 6-oxidase that mediates the oxidation of peptidyl lysine residues to allysine in target proteins. Catalyzes the post-translational oxidative deamination of peptidyl lysine residues in precursors of elastin and different types of collagens, a prerequisite in the formation of cross-links between collagens and elastin. Required for somite boundary formation by catalyzing oxidation of fibronectin (FN1), enhancing integrin signaling in myofibers and their adhesion to the myotendinous junction (MTJ). Acts as a regulator of inflammatory response by inhibiting differentiation of naive CD4(+) T-cells into T-helper Th17 or regulatory T-cells (Treg): acts by interacting with STAT3 in the nucleus and catalyzing both deacetylation and oxidation of lysine residues on STAT3, leading to disrupt STAT3 dimerization and inhibit STAT3 transcription activity. Oxidation of lysine residues to allysine on STAT3 preferentially takes place on lysine residues that are acetylated. Also able to catalyze deacetylation of lysine residues on STAT3. This chain is Lysyl oxidase homolog 3, found in Mus musculus (Mouse).